Consider the following 337-residue polypeptide: Angiopoietin-related protein 7 (337 aa).

The signal sequence occupies residues 1–21 (MLRETWLCVILVAFVSHPVWL). Residues 30 to 110 (QLKAAGCCEE…DIMQLQAAQT (81 aa)) are a coiled coil. N-linked (GlcNAc...) asparagine glycosylation occurs at asparagine 49. The 222-residue stretch at 113–334 (QTSADAIYDC…RVEMKIRPEA (222 aa)) folds into the Fibrinogen C-terminal domain. Cysteine 122 and cysteine 153 form a disulfide bridge. 2 N-linked (GlcNAc...) asparagine glycosylation sites follow: asparagine 244 and asparagine 258. Cysteine 276 and cysteine 289 are joined by a disulfide. Asparagine 320 carries an N-linked (GlcNAc...) asparagine glycan.

As to quaternary structure, homotetramer; disulfide-linked.

The protein localises to the secreted. Functionally, has a role in the formation and organization of the extracellular matrix. In the eye, it functions as a mediator of dexamethasone-induced matrix deposition in the trabecular meshwork, the tissue responsible for the outflow of the ocular aqueous humor and for the maintenance of intraocular pressure. Is a negative regulator of angiogenesis in the cornea, and plays a major role in maintaining corneal avascularity and transparency. This Mus musculus (Mouse) protein is Angiopoietin-related protein 7 (Angptl7).